The sequence spans 194 residues: Large ribosomal subunit protein eL15 (194 aa).

Residues 165-194 (AGKKGRGLRNKGKGAEKVRPSIRANEGKGK) are disordered. Basic residues predominate over residues 167–176 (KKGRGLRNKG). Residues 177–194 (KGAEKVRPSIRANEGKGK) show a composition bias toward basic and acidic residues.

It belongs to the eukaryotic ribosomal protein eL15 family. In terms of assembly, part of the 50S ribosomal subunit.

In Pyrococcus furiosus (strain ATCC 43587 / DSM 3638 / JCM 8422 / Vc1), this protein is Large ribosomal subunit protein eL15.